A 561-amino-acid chain; its full sequence is DNA ligase (561 aa).

E247 lines the ATP pocket. K249 acts as the N6-AMP-lysine intermediate in catalysis. ATP is bound by residues R254, R269, E299, F339, R414, and K420.

The protein belongs to the ATP-dependent DNA ligase family. In terms of assembly, monomer. It depends on Mg(2+) as a cofactor.

The catalysed reaction is ATP + (deoxyribonucleotide)n-3'-hydroxyl + 5'-phospho-(deoxyribonucleotide)m = (deoxyribonucleotide)n+m + AMP + diphosphate.. Functionally, DNA ligase that seals nicks in double-stranded DNA during DNA replication, DNA recombination and DNA repair. The sequence is that of DNA ligase from Pyrococcus furiosus (strain ATCC 43587 / DSM 3638 / JCM 8422 / Vc1).